We begin with the raw amino-acid sequence, 1277 residues long: Membrane-associated guanylate kinase, WW and PDZ domain-containing protein 2 (1277 aa).

Residues 17–101 (ESVIGRNPEG…PLRLKCVKQG (85 aa)) enclose the PDZ domain. The Guanylate kinase-like domain occupies 109–283 (RHYLNLRFQK…APVYSQPEEL (175 aa)). A disordered region spans residues 205 to 308 (PGATPSAEGK…EDSDPLPDNW (104 aa)). Residues 281-296 (EELKDQMDDTKSTKPE) show a composition bias toward basic and acidic residues. WW domains are found at residues 302–335 (DPLPDNWEMAYTEKGEVYFIDHNTKTTSWLDPRL) and 348–381 (NELPYGWEKIDDPIYGTYYVDHINRRTQFENPVL). Residues 302 to 381 (DPLPDNWEMA…RRTQFENPVL (80 aa)) form an interaction with DDN region. Y362 is subject to Phosphotyrosine. The region spanning 426–510 (STTLKKSNMG…SVNLVLCRGY (85 aa)) is the PDZ 1 domain. Residues 556 to 575 (QSVPDITDRPPHSLHSMPAD) form a disordered region. One can recognise a PDZ 2 domain in the interval 605–683 (TLTIVKGAKG…ETSLIIHRGG (79 aa)). At S686 the chain carries Phosphoserine. The PDZ 3 domain occupies 778–860 (DVHLRRMESG…NGQVNLTVRR (83 aa)). Y827 bears the Phosphotyrosine mark. The segment at 869-913 (CPENGRSPGSVSTHHSSPRSDYATYANSNHAAPSNNASPPEGFAS) is disordered. S884 and S885 each carry phosphoserine. The segment covering 894–908 (ANSNHAAPSNNASPP) has biased composition (low complexity). The PDZ 4 domain occupies 920 to 1010 (DVIIHRKENE…SVTLRIIPQE (91 aa)). The span at 1011 to 1042 (ELNNPTSAPSSEKQSPMAQQHSPLAQQHSPLA) shows a compositional bias: polar residues. Residues 1011–1130 (ELNNPTSAPS…PDTRQYPLSD (120 aa)) form a disordered region. Residues 1069–1085 (NSYRSEVKARQDVKPDI) show a composition bias toward basic and acidic residues. The PDZ 5 domain occupies 1141–1223 (TVDMEKGAKG…RVRLLLKRGT (83 aa)).

The protein belongs to the MAGUK family. Interacts (via its WW domains) with DRPLA. Interacts with CTNNB1, ACVR2A, SMAD2 and SMAD3. Part of a complex consisting of MAGI2/ARIP1, ACVR2A, ACVR1B and SMAD3. May interact with HTR2A and IGSF9. Interacts with HTR4. Interacts (via guanylate kinase domain) with DLGAP1. Interacts (via PDZ domains) with GRIN2A, GRID2 and NLGN1. Interacts with CTNND2. Interacts with MAGUIN-1. Interacts (via its second PDZ domain) with PTEN (via unphosphorylated C-terminus); this interaction diminishes the degradation rate of PTEN. Found in a complex, at least composed of KIDINS220, MAGI2, NTRK1 and RAPGEF2; the complex is mainly formed at late endosomes in a NGF-dependent manner. Interacts with RAPGEF2; the interaction occurs before or after nerve growth factor (NGF) stimulation. Isoform 1 interacts (via PDZ domain) with KIDINS220 isoform 2 (via C-terminal domain). Interacts with DDN. Identified in a complex with ACTN4, CASK, IQGAP1, NPHS1, SPTAN1 and SPTBN1. Interacts with DLL1. Found in a complex with IGSF9B and NLGN2; the interaction with IGSF9B is mediated via the PDZ 5 and PDZ 6 domains, while the interaction with NLGN2 is mediated via the WW1, WW2 and PDZ2 domains. Interacts (via PDZ 6 domain) with USH1G (via SAM domain); the interaction is triggered by phosphorylation of USH1G by CK2 and negatively regulates MAGI2-mediated endocytosis. Expressed in the foot process layer of podocytes of the kidney glomeruli but not in tubules (at protein level). Expressed in the brain.

The protein resides in the cytoplasm. It localises to the late endosome. Its subcellular location is the synapse. The protein localises to the synaptosome. It is found in the cell membrane. The protein resides in the cytoskeleton. It localises to the microtubule organizing center. Its subcellular location is the centrosome. The protein localises to the cell projection. It is found in the cilium. The protein resides in the centriole. It localises to the photoreceptor inner segment. Its subcellular location is the photoreceptor outer segment. Functionally, seems to act as scaffold molecule at synaptic junctions by assembling neurotransmitter receptors and cell adhesion proteins. Plays a role in nerve growth factor (NGF)-induced recruitment of RAPGEF2 to late endosomes and neurite outgrowth. May play a role in regulating activin-mediated signaling in neuronal cells. Enhances the ability of PTEN to suppress AKT1 activation. Plays a role in receptor-mediated clathrin-dependent endocytosis which is required for ciliogenesis. This is Membrane-associated guanylate kinase, WW and PDZ domain-containing protein 2 (Magi2) from Rattus norvegicus (Rat).